Reading from the N-terminus, the 261-residue chain is F-actin-capping protein subunit alpha (261 aa).

The protein belongs to the F-actin-capping protein alpha subunit family. In terms of assembly, heterodimer of an alpha and a beta subunit.

In terms of biological role, F-actin-capping proteins bind in a Ca(2+)-independent manner to the fast growing ends of actin filaments (barbed end) thereby blocking the exchange of subunits at these ends. Unlike other capping proteins (such as gelsolin and severin), these proteins do not sever actin filaments. The protein is F-actin-capping protein subunit alpha (CAP1) of Eremothecium gossypii (strain ATCC 10895 / CBS 109.51 / FGSC 9923 / NRRL Y-1056) (Yeast).